The sequence spans 194 residues: Large ribosomal subunit protein eL15 (194 aa).

Positions 165 to 194 (AGKKGRGLRNKGKGAEKVRPSIRANEGKGK) are disordered. A compositionally biased stretch (basic residues) spans 167-176 (KKGRGLRNKG). Residues 177–194 (KGAEKVRPSIRANEGKGK) show a composition bias toward basic and acidic residues.

It belongs to the eukaryotic ribosomal protein eL15 family. As to quaternary structure, part of the 50S ribosomal subunit.

In Pyrococcus furiosus (strain ATCC 43587 / DSM 3638 / JCM 8422 / Vc1), this protein is Large ribosomal subunit protein eL15.